Here is an 882-residue protein sequence, read N- to C-terminus: Alanine--tRNA ligase (882 aa).

Zn(2+)-binding residues include His-568, His-572, Cys-670, and His-674.

This sequence belongs to the class-II aminoacyl-tRNA synthetase family. Zn(2+) serves as cofactor.

The protein localises to the cytoplasm. It catalyses the reaction tRNA(Ala) + L-alanine + ATP = L-alanyl-tRNA(Ala) + AMP + diphosphate. Catalyzes the attachment of alanine to tRNA(Ala) in a two-step reaction: alanine is first activated by ATP to form Ala-AMP and then transferred to the acceptor end of tRNA(Ala). Also edits incorrectly charged Ser-tRNA(Ala) and Gly-tRNA(Ala) via its editing domain. The protein is Alanine--tRNA ligase of Syntrophotalea carbinolica (strain DSM 2380 / NBRC 103641 / GraBd1) (Pelobacter carbinolicus).